Reading from the N-terminus, the 390-residue chain is Bifunctional enzyme IspD/IspF (390 aa).

A 2-C-methyl-D-erythritol 4-phosphate cytidylyltransferase region spans residues 1-229; the sequence is MAAGRGERAG…RQDHAVFPDI (229 aa). A 2-C-methyl-D-erythritol 2,4-cyclodiphosphate synthase region spans residues 230-390; it reads RTGNGYDVHS…TVIYPGEVPE (161 aa). A divalent metal cation-binding residues include Asp236 and His238. 4-CDP-2-C-methyl-D-erythritol 2-phosphate-binding positions include 236 to 238 and 262 to 263; these read DVH and HS. A divalent metal cation is bound at residue His270. Residues 284 to 286, 360 to 363, Phe367, and Arg370 each bind 4-CDP-2-C-methyl-D-erythritol 2-phosphate; these read DIG and TTNE.

This sequence in the N-terminal section; belongs to the IspD/TarI cytidylyltransferase family. IspD subfamily. In the C-terminal section; belongs to the IspF family. The cofactor is a divalent metal cation.

The catalysed reaction is 2-C-methyl-D-erythritol 4-phosphate + CTP + H(+) = 4-CDP-2-C-methyl-D-erythritol + diphosphate. The enzyme catalyses 4-CDP-2-C-methyl-D-erythritol 2-phosphate = 2-C-methyl-D-erythritol 2,4-cyclic diphosphate + CMP. It functions in the pathway isoprenoid biosynthesis; isopentenyl diphosphate biosynthesis via DXP pathway; isopentenyl diphosphate from 1-deoxy-D-xylulose 5-phosphate: step 2/6. It participates in isoprenoid biosynthesis; isopentenyl diphosphate biosynthesis via DXP pathway; isopentenyl diphosphate from 1-deoxy-D-xylulose 5-phosphate: step 4/6. Bifunctional enzyme that catalyzes the formation of 4-diphosphocytidyl-2-C-methyl-D-erythritol from CTP and 2-C-methyl-D-erythritol 4-phosphate (MEP) (IspD), and catalyzes the conversion of 4-diphosphocytidyl-2-C-methyl-D-erythritol 2-phosphate (CDP-ME2P) to 2-C-methyl-D-erythritol 2,4-cyclodiphosphate (ME-CPP) with a corresponding release of cytidine 5-monophosphate (CMP) (IspF). The chain is Bifunctional enzyme IspD/IspF from Brucella suis biovar 1 (strain 1330).